A 299-amino-acid polypeptide reads, in one-letter code: Coenzyme PQQ synthesis protein B (299 aa).

This sequence belongs to the PqqB family.

Its pathway is cofactor biosynthesis; pyrroloquinoline quinone biosynthesis. Functionally, may be involved in the transport of PQQ or its precursor to the periplasm. In Xanthomonas campestris pv. campestris (strain 8004), this protein is Coenzyme PQQ synthesis protein B.